A 209-amino-acid chain; its full sequence is Cyclin-dependent kinase inhibitor 2 (209 aa).

Residues M1–D32 form a required for nuclear localization region.

This sequence belongs to the CDI family. ICK/KRP subfamily. In terms of assembly, specifically interacts with CDKA-1, but not with CDKB1-1. In terms of processing, phosphorylated.

The protein localises to the nucleus. It is found in the nucleoplasm. Binds and inhibits CYCD2-1/CDKA-1 complex kinase activity. Regulates cell division which is crucial for plant growth, development and morphogenesis. May regulate early lateral root initiation by blocking the G1/S phase transition. Controls the mitosis-to-endocycle transition and the onset of the endoreduplication cycle during leaf development through inhibition of mitotic CDKA-1 kinase complexes. Specifically targets CDKA-1. This Arabidopsis thaliana (Mouse-ear cress) protein is Cyclin-dependent kinase inhibitor 2 (KRP2).